Consider the following 68-residue polypeptide: Large ribosomal subunit protein uL29 (68 aa).

The protein belongs to the universal ribosomal protein uL29 family.

This Chlorobaculum tepidum (strain ATCC 49652 / DSM 12025 / NBRC 103806 / TLS) (Chlorobium tepidum) protein is Large ribosomal subunit protein uL29.